The primary structure comprises 425 residues: MAGYVVVGTQWGDEGKGKIIDVLSEKADYVVRFQGGNNAGHTVVVDGEKFILQLLPSGVLQAGTCVIGPGVVIDPKVFLDEIDRIEKRGAKTDHVIISDRAHVIMPYHIEMDKIRESVEDRIKIGTTKKGIGPCYADKISRDGIRMSDLLDLKQFEEKLRYNLKEKNEIFTKIYGLEPLDFDTIFEEYKGYAEKIKHRIVDTIPMVNKALDENKLVLFEGAQAMMLDINYGTYPYVTSSSPTLGGVTTGAGISPRKIDKGIGVMKAYTTRVGEGPFVTEIKGEFGDKIRGIGGEYGAVTGRPRRCGWLDLVVGRYATEINGLTDIVMTKIDVLSGLGKLKICTAYEIDGVIHEYVPADTKSLDRAIPIYEELDGWDEDITQIKKYEDLPVNCRKYLERVQEILGCPISVVSVGPDRSQNIHIREI.

GTP contacts are provided by residues 12 to 18 and 40 to 42; these read GDEGKGK and GHT. The active-site Proton acceptor is the D13. The Mg(2+) site is built by D13 and G40. IMP contacts are provided by residues 13–16, 38–41, T127, R141, Q222, T237, and R301; these read DEGK and NAGH. The Proton donor role is filled by H41. 297–303 lines the substrate pocket; it reads AVTGRPR. GTP is bound by residues R303, 329–331, and 411–413; these read KID and SVG.

It belongs to the adenylosuccinate synthetase family. Homodimer. Requires Mg(2+) as cofactor.

The protein localises to the cytoplasm. The catalysed reaction is IMP + L-aspartate + GTP = N(6)-(1,2-dicarboxyethyl)-AMP + GDP + phosphate + 2 H(+). Its pathway is purine metabolism; AMP biosynthesis via de novo pathway; AMP from IMP: step 1/2. Its function is as follows. Plays an important role in the de novo pathway of purine nucleotide biosynthesis. Catalyzes the first committed step in the biosynthesis of AMP from IMP. The protein is Adenylosuccinate synthetase of Fusobacterium nucleatum subsp. nucleatum (strain ATCC 25586 / DSM 15643 / BCRC 10681 / CIP 101130 / JCM 8532 / KCTC 2640 / LMG 13131 / VPI 4355).